A 361-amino-acid chain; its full sequence is tRNA-specific 2-thiouridylase MnmA (361 aa).

ATP-binding positions include 10–17 (GMSGGVDS) and Met-36. Catalysis depends on Cys-104, which acts as the Nucleophile. Cys-104 and Cys-202 are disulfide-bonded. Gly-128 serves as a coordination point for ATP. The segment at 152–154 (KDQ) is interaction with tRNA. The Cysteine persulfide intermediate role is filled by Cys-202. The interval 308–309 (RY) is interaction with tRNA.

This sequence belongs to the MnmA/TRMU family.

The protein resides in the cytoplasm. It catalyses the reaction S-sulfanyl-L-cysteinyl-[protein] + uridine(34) in tRNA + AH2 + ATP = 2-thiouridine(34) in tRNA + L-cysteinyl-[protein] + A + AMP + diphosphate + H(+). Its function is as follows. Catalyzes the 2-thiolation of uridine at the wobble position (U34) of tRNA, leading to the formation of s(2)U34. This Clostridioides difficile (strain 630) (Peptoclostridium difficile) protein is tRNA-specific 2-thiouridylase MnmA.